Consider the following 470-residue polypeptide: UDP-N-acetylmuramate--L-alanine ligase (470 aa).

114 to 120 (GTHGKTT) contacts ATP.

The protein belongs to the MurCDEF family.

Its subcellular location is the cytoplasm. It carries out the reaction UDP-N-acetyl-alpha-D-muramate + L-alanine + ATP = UDP-N-acetyl-alpha-D-muramoyl-L-alanine + ADP + phosphate + H(+). Its pathway is cell wall biogenesis; peptidoglycan biosynthesis. Its function is as follows. Cell wall formation. The sequence is that of UDP-N-acetylmuramate--L-alanine ligase from Xanthobacter autotrophicus (strain ATCC BAA-1158 / Py2).